Here is a 1102-residue protein sequence, read N- to C-terminus: Carbamoyl phosphate synthase large chain (1102 aa).

The tract at residues 1–408 (MPKRTDIQSV…AFQKALRSLE (408 aa)) is carboxyphosphate synthetic domain. The ATP site is built by R129, R175, G181, G182, E214, I216, E221, G247, V248, H249, Q291, and E305. The region spanning 137 to 334 (EEVRKKIGHG…IAKIAAKLAV (198 aa)) is the ATP-grasp 1 domain. Positions 291, 305, and 307 each coordinate Mg(2+). Positions 291, 305, and 307 each coordinate Mn(2+). The oligomerization domain stretch occupies residues 409 to 551 (KKGSQFTFVG…YFYSSYDEES (143 aa)). A carbamoyl phosphate synthetic domain region spans residues 552 to 954 (EVAPREKPAV…AYAKSQAGAY (403 aa)). Positions 682 to 873 (GRVLAEAGLP…LAKAAARISL (192 aa)) constitute an ATP-grasp 2 domain. ATP is bound by residues R718, R757, L759, E764, G789, I790, H791, S792, Q832, and E844. Residues Q832, E844, and N846 each contribute to the Mg(2+) site. Mn(2+) contacts are provided by Q832, E844, and N846. The region spanning 955–1100 (GPLPTKGRAF…QEHAAFLIAA (146 aa)) is the MGS-like domain. The allosteric domain stretch occupies residues 955–1102 (GPLPTKGRAF…HAAFLIAARD (148 aa)).

It belongs to the CarB family. Composed of two chains; the small (or glutamine) chain promotes the hydrolysis of glutamine to ammonia, which is used by the large (or ammonia) chain to synthesize carbamoyl phosphate. Tetramer of heterodimers (alpha,beta)4. Mg(2+) serves as cofactor. Requires Mn(2+) as cofactor.

The catalysed reaction is hydrogencarbonate + L-glutamine + 2 ATP + H2O = carbamoyl phosphate + L-glutamate + 2 ADP + phosphate + 2 H(+). It carries out the reaction hydrogencarbonate + NH4(+) + 2 ATP = carbamoyl phosphate + 2 ADP + phosphate + 2 H(+). The protein operates within amino-acid biosynthesis; L-arginine biosynthesis; carbamoyl phosphate from bicarbonate: step 1/1. Its pathway is pyrimidine metabolism; UMP biosynthesis via de novo pathway; (S)-dihydroorotate from bicarbonate: step 1/3. Functionally, large subunit of the glutamine-dependent carbamoyl phosphate synthetase (CPSase). CPSase catalyzes the formation of carbamoyl phosphate from the ammonia moiety of glutamine, carbonate, and phosphate donated by ATP, constituting the first step of 2 biosynthetic pathways, one leading to arginine and/or urea and the other to pyrimidine nucleotides. The large subunit (synthetase) binds the substrates ammonia (free or transferred from glutamine from the small subunit), hydrogencarbonate and ATP and carries out an ATP-coupled ligase reaction, activating hydrogencarbonate by forming carboxy phosphate which reacts with ammonia to form carbamoyl phosphate. The polypeptide is Carbamoyl phosphate synthase large chain (Streptomyces coelicolor (strain ATCC BAA-471 / A3(2) / M145)).